A 1027-amino-acid chain; its full sequence is A-factor-processing enzyme (1027 aa).

Histidine 118 serves as a coordination point for Zn(2+). Residue glutamate 121 is the Proton acceptor of the active site. Residues histidine 122 and glutamate 199 each coordinate Zn(2+).

It belongs to the peptidase M16 family. It depends on Zn(2+) as a cofactor.

It is found in the membrane. With respect to regulation, inhibited by chelating agents like EDTA, TPEN and 1,1-phenanthroline, as well as NEM, free cysteine and DTT. Involved in the N-terminal endoproteolytic cleavage of the P2 precursor of the a-factor mating pheromone. Capable of proteolysing the established mammalian insulin-degrading enzymes (IDEs) substrates amyloid-beta peptide and insulin B-chain. The sequence is that of A-factor-processing enzyme (STE23) from Saccharomyces cerevisiae (strain ATCC 204508 / S288c) (Baker's yeast).